The primary structure comprises 654 residues: Fructose-1,6-bisphosphatase class 3 (654 aa).

A disordered region spans residues 288-307 (NPAFKPKKRPDKHERLTQRE). Over residues 298-307 (DKHERLTQRE) the composition is skewed to basic and acidic residues.

This sequence belongs to the FBPase class 3 family. Mn(2+) is required as a cofactor.

It catalyses the reaction beta-D-fructose 1,6-bisphosphate + H2O = beta-D-fructose 6-phosphate + phosphate. The protein operates within carbohydrate biosynthesis; gluconeogenesis. This Staphylococcus aureus (strain MRSA252) protein is Fructose-1,6-bisphosphatase class 3.